Consider the following 183-residue polypeptide: Adenine phosphoribosyltransferase (183 aa).

Belongs to the purine/pyrimidine phosphoribosyltransferase family. In terms of assembly, homodimer.

The protein resides in the cytoplasm. The enzyme catalyses AMP + diphosphate = 5-phospho-alpha-D-ribose 1-diphosphate + adenine. Its pathway is purine metabolism; AMP biosynthesis via salvage pathway; AMP from adenine: step 1/1. In terms of biological role, catalyzes a salvage reaction resulting in the formation of AMP, that is energically less costly than de novo synthesis. The polypeptide is Adenine phosphoribosyltransferase (Salmonella arizonae (strain ATCC BAA-731 / CDC346-86 / RSK2980)).